The chain runs to 351 residues: Quinolinate phosphoribosyltransferase [decarboxylating] 2a, mitochondrial (351 aa).

Residues R142, 173 to 175 (TRK), R197, K207, E240, D267, 299 to 301 (SGN), and 320 to 322 (SGA) contribute to the substrate site.

Belongs to the NadC/ModD family. In terms of tissue distribution, expressed in roots and flowers.

Its subcellular location is the mitochondrion. The enzyme catalyses nicotinate beta-D-ribonucleotide + CO2 + diphosphate = quinolinate + 5-phospho-alpha-D-ribose 1-diphosphate + 2 H(+). Its pathway is alkaloid biosynthesis; nicotine biosynthesis. It functions in the pathway cofactor biosynthesis; NAD(+) biosynthesis; nicotinate D-ribonucleotide from quinolinate: step 1/1. In terms of biological role, involved in the biosynthesis of pyridine alkaloid natural products, leading mainly to the production of anabasine, anatabine, nicotine and nornicotine, effective deterrents against herbivores with antiparasitic and pesticide properties (neurotoxins); nornicotine serves as the precursor in the synthesis of the carcinogen compound N'-nitrosonornicotine (NNN). Involved in the catabolism of quinolinic acid (QA). This Nicotiana tabacum (Common tobacco) protein is Quinolinate phosphoribosyltransferase [decarboxylating] 2a, mitochondrial.